Reading from the N-terminus, the 444-residue chain is Phosphoglucosamine mutase (444 aa).

S104 (phosphoserine intermediate) is an active-site residue. The Mg(2+) site is built by S104, D243, D245, and D247. S104 bears the Phosphoserine mark.

This sequence belongs to the phosphohexose mutase family. Requires Mg(2+) as cofactor. In terms of processing, activated by phosphorylation.

The enzyme catalyses alpha-D-glucosamine 1-phosphate = D-glucosamine 6-phosphate. In terms of biological role, catalyzes the conversion of glucosamine-6-phosphate to glucosamine-1-phosphate. The chain is Phosphoglucosamine mutase from Neisseria meningitidis serogroup A / serotype 4A (strain DSM 15465 / Z2491).